Consider the following 406-residue polypeptide: Gustatory receptor for sugar taste 64b (406 aa).

At 1-47 the chain is on the cytoplasmic side; the sequence is MPQGETFHRAVSNVLFISQIYGLLPVSNVRALDVADIRFRWCSPRIL. Residues 48–68 traverse the membrane as a helical segment; sequence YSLLIGILNLSEFGAVINYVI. Residues 69–79 lie on the Extracellular side of the membrane; that stretch reads KVTINFHTSST. The chain crosses the membrane as a helical span at residues 80-100; it reads LSLYIVCLLEHLFFWRLAIQW. At 101–130 the chain is on the cytoplasmic side; sequence PRIMRTWHGVEQLFLRVPYRFYGEYRIKRR. The chain crosses the membrane as a helical span at residues 131 to 151; that stretch reads IYIVFTIVMSSALVEHCLLLG. The Extracellular portion of the chain corresponds to 152–183; the sequence is NSFHLSNMERTQCKINVTYFESIYKWERPHLY. An N-linked (GlcNAc...) asparagine glycan is attached at Asn-167. Residues 184–204 traverse the membrane as a helical segment; that stretch reads MILPYHFWMLPILEWVNQTIA. Topologically, residues 205–265 are cytoplasmic; that stretch reads YPRSFTDCFI…KRLVHLLDAA (61 aa). Residues 266 to 286 traverse the membrane as a helical segment; it reads IAPLVLLAFGNNMSFICFQLF. Over 287-290 the chain is Extracellular; sequence NSFK. The helical transmembrane segment at 291 to 311 threads the bilayer; the sequence is NIGVDFLVMLAFWYSLGFAVV. The Cytoplasmic portion of the chain corresponds to 312–370; sequence RTLLTIFVASSINDYERKIVTALRDVPSRAWSIEVQRFSEQLGNDTTALSGSGFFYLTR. Residues 371 to 391 traverse the membrane as a helical segment; the sequence is SLVLAMGTTIITYELMISDVI. Residues 392-406 lie on the Extracellular side of the membrane; that stretch reads NQGSIRQKTQYCREY.

Belongs to the insect chemoreceptor superfamily. Gustatory receptor (GR) family. Gr5a subfamily. In terms of tissue distribution, expressed in Gr5a-expressing sugar-sensing cells.

It localises to the cell membrane. Its function is as follows. One of the few identified sugar gustatory receptors identified so far and which promotes the starvation-induced increase of feeding motivation. The polypeptide is Gustatory receptor for sugar taste 64b (Gr64b) (Drosophila melanogaster (Fruit fly)).